The following is a 399-amino-acid chain: Acetate kinase (399 aa).

Asn-8 is a Mg(2+) binding site. Lys-15 is a binding site for ATP. Arg-89 serves as a coordination point for substrate. Asp-147 (proton donor/acceptor) is an active-site residue. Residues 207 to 211 (HMGNG), 284 to 286 (DMR), and 332 to 336 (GIGEN) each bind ATP. Residue Glu-385 coordinates Mg(2+).

Belongs to the acetokinase family. As to quaternary structure, homodimer. Mg(2+) is required as a cofactor. It depends on Mn(2+) as a cofactor.

Its subcellular location is the cytoplasm. The catalysed reaction is acetate + ATP = acetyl phosphate + ADP. Its pathway is metabolic intermediate biosynthesis; acetyl-CoA biosynthesis; acetyl-CoA from acetate: step 1/2. Functionally, catalyzes the formation of acetyl phosphate from acetate and ATP. Can also catalyze the reverse reaction. The protein is Acetate kinase of Streptococcus mutans serotype c (strain ATCC 700610 / UA159).